Here is a 1136-residue protein sequence, read N- to C-terminus: Nitric oxide synthase, inducible (1136 aa).

Zn(2+) is bound by residues C107 and C112. C197 provides a ligand contact to heme b. L-arginine is bound by residues Q260, W369, Y370, and E374. R378, V459, W460, and F473 together coordinate (6R)-L-erythro-5,6,7,8-tetrahydrobiopterin. Position 488 (Y488) interacts with heme b. Positions 512–532 (LSILAKAVLLASLLLQKTMAA) are calmodulin-binding. Residues 536–674 (VTVIYATETG…AFRTWAVTAF (139 aa)) form the Flavodoxin-like domain. 11 residues coordinate FMN: T542, E543, T544, K546, S547, S588, T589, S625, C632, E658, and Q662. The FAD-binding FR-type domain maps to 727–967 (KNVIPMKLKF…VRSADGFRLP (241 aa)). R747 lines the NADP(+) pocket. 10 residues coordinate FAD: H769, R903, Y905, S906, T921, A923, Y927, V940, C941, and S942. NADP(+) contacts are provided by T981, R1014, S1043, R1044, K1050, Y1052, Q1054, and D1087.

The protein belongs to the NOS family. As to quaternary structure, homodimer. Heme b is required as a cofactor. Requires FAD as cofactor. It depends on FMN as a cofactor. The cofactor is (6R)-L-erythro-5,6,7,8-tetrahydrobiopterin.

Its subcellular location is the cytoplasm. The protein resides in the cytosol. It catalyses the reaction 2 L-arginine + 3 NADPH + 4 O2 + H(+) = 2 L-citrulline + 2 nitric oxide + 3 NADP(+) + 4 H2O. Its activity is regulated as follows. Not stimulated by calcium/calmodulin. Functionally, produces nitric oxide (NO) which is a messenger molecule with diverse functions throughout the body. NO may serve as both a paracrine and autocrine signal for modulating osteoclast bone resorption. Also has nitrosylase activity and mediates cysteine S-nitrosylation of cytoplasmic target proteins such COX2. The protein is Nitric oxide synthase, inducible (NOS2) of Gallus gallus (Chicken).